The sequence spans 65 residues: Large ribosomal subunit protein uL29 (65 aa).

The protein belongs to the universal ribosomal protein uL29 family.

The sequence is that of Large ribosomal subunit protein uL29 from Leptothrix cholodnii (strain ATCC 51168 / LMG 8142 / SP-6) (Leptothrix discophora (strain SP-6)).